A 589-amino-acid polypeptide reads, in one-letter code: 2-succinyl-5-enolpyruvyl-6-hydroxy-3-cyclohexene-1-carboxylate synthase (589 aa).

This sequence belongs to the TPP enzyme family. MenD subfamily. As to quaternary structure, homodimer. The cofactor is Mg(2+). It depends on Mn(2+) as a cofactor. Requires thiamine diphosphate as cofactor.

The catalysed reaction is isochorismate + 2-oxoglutarate + H(+) = 5-enolpyruvoyl-6-hydroxy-2-succinyl-cyclohex-3-ene-1-carboxylate + CO2. It participates in quinol/quinone metabolism; 1,4-dihydroxy-2-naphthoate biosynthesis; 1,4-dihydroxy-2-naphthoate from chorismate: step 2/7. It functions in the pathway quinol/quinone metabolism; menaquinone biosynthesis. Catalyzes the thiamine diphosphate-dependent decarboxylation of 2-oxoglutarate and the subsequent addition of the resulting succinic semialdehyde-thiamine pyrophosphate anion to isochorismate to yield 2-succinyl-5-enolpyruvyl-6-hydroxy-3-cyclohexene-1-carboxylate (SEPHCHC). This chain is 2-succinyl-5-enolpyruvyl-6-hydroxy-3-cyclohexene-1-carboxylate synthase, found in Myxococcus xanthus (strain DK1622).